A 194-amino-acid polypeptide reads, in one-letter code: ATP-dependent Clp protease proteolytic subunit (194 aa).

Ser-98 functions as the Nucleophile in the catalytic mechanism. His-123 is an active-site residue.

The protein belongs to the peptidase S14 family. As to quaternary structure, fourteen ClpP subunits assemble into 2 heptameric rings which stack back to back to give a disk-like structure with a central cavity, resembling the structure of eukaryotic proteasomes.

It localises to the cytoplasm. It carries out the reaction Hydrolysis of proteins to small peptides in the presence of ATP and magnesium. alpha-casein is the usual test substrate. In the absence of ATP, only oligopeptides shorter than five residues are hydrolyzed (such as succinyl-Leu-Tyr-|-NHMec, and Leu-Tyr-Leu-|-Tyr-Trp, in which cleavage of the -Tyr-|-Leu- and -Tyr-|-Trp bonds also occurs).. Cleaves peptides in various proteins in a process that requires ATP hydrolysis. Has a chymotrypsin-like activity. Plays a major role in the degradation of misfolded proteins. This is ATP-dependent Clp protease proteolytic subunit from Aliarcobacter butzleri (strain RM4018) (Arcobacter butzleri).